The primary structure comprises 78 residues: Pigment-dispersing hormone 1 peptides (78 aa).

The N-terminal stretch at 1–22 (MRSSVIVAVLVVVALAALLTQG) is a signal peptide. Alanine amide is present on alanine 75.

The protein belongs to the arthropod PDH family. Eyestalk sinus gland.

The protein localises to the secreted. The pigment-dispersing hormone causes the migration of the distal retinal pigment into the proximal end of the pigment chromatophore cells and thus decreases the amount of light entering the retinulas. May also function as a neurotransmitter and/or neuromodulator. The polypeptide is Pigment-dispersing hormone 1 peptides (PDH1) (Callinectes sapidus (Blue crab)).